Consider the following 268-residue polypeptide: Glutamate racemase (268 aa).

Residues 14 to 15 (DS) and 46 to 47 (YG) contribute to the substrate site. C78 acts as the Proton donor/acceptor in catalysis. 79-80 (NT) provides a ligand contact to substrate. Catalysis depends on C192, which acts as the Proton donor/acceptor. A substrate-binding site is contributed by 193–194 (TH).

It belongs to the aspartate/glutamate racemases family.

The catalysed reaction is L-glutamate = D-glutamate. The protein operates within cell wall biogenesis; peptidoglycan biosynthesis. Provides the (R)-glutamate required for cell wall biosynthesis. In Sphingopyxis alaskensis (strain DSM 13593 / LMG 18877 / RB2256) (Sphingomonas alaskensis), this protein is Glutamate racemase.